We begin with the raw amino-acid sequence, 244 residues long: Glutathione S-transferase theta-2B (244 aa).

The region spanning 2 to 82 is the GST N-terminal domain; the sequence is GLELFLDLVS…YLSCKYQTPD (81 aa). Glutathione contacts are provided by residues 40 to 41, 53 to 54, 66 to 67, and 104 to 107; these read HK, KL, ES, and DCIR. In terms of domain architecture, GST C-terminal spans 88–224; sequence DLQARARVHE…SILEQAAKKT (137 aa).

Belongs to the GST superfamily. Theta family. As to quaternary structure, homodimer. As to expression, expressed at low levels in liver. In lung, expressed at low levels in ciliated bronchiolar cells, alveolar macrophages and alveolar type II cells.

It is found in the cytoplasm. The protein resides in the cytosol. The enzyme catalyses RX + glutathione = an S-substituted glutathione + a halide anion + H(+). Conjugation of reduced glutathione to a wide number of exogenous and endogenous hydrophobic electrophiles. Has a sulfatase activity. This Homo sapiens (Human) protein is Glutathione S-transferase theta-2B (GSTT2B).